A 164-amino-acid polypeptide reads, in one-letter code: 6,7-dimethyl-8-ribityllumazine synthase (164 aa).

Residues Tyr30, 61–63 (ALE), and 85–87 (CVI) each bind 5-amino-6-(D-ribitylamino)uracil. 90-91 (ET) contacts (2S)-2-hydroxy-3-oxobutyl phosphate. His93 serves as the catalytic Proton donor. Residue Asn118 coordinates 5-amino-6-(D-ribitylamino)uracil. Position 132 (Arg132) interacts with (2S)-2-hydroxy-3-oxobutyl phosphate.

It belongs to the DMRL synthase family.

It carries out the reaction (2S)-2-hydroxy-3-oxobutyl phosphate + 5-amino-6-(D-ribitylamino)uracil = 6,7-dimethyl-8-(1-D-ribityl)lumazine + phosphate + 2 H2O + H(+). It functions in the pathway cofactor biosynthesis; riboflavin biosynthesis; riboflavin from 2-hydroxy-3-oxobutyl phosphate and 5-amino-6-(D-ribitylamino)uracil: step 1/2. In terms of biological role, catalyzes the formation of 6,7-dimethyl-8-ribityllumazine by condensation of 5-amino-6-(D-ribitylamino)uracil with 3,4-dihydroxy-2-butanone 4-phosphate. This is the penultimate step in the biosynthesis of riboflavin. The sequence is that of 6,7-dimethyl-8-ribityllumazine synthase from Methylobacterium radiotolerans (strain ATCC 27329 / DSM 1819 / JCM 2831 / NBRC 15690 / NCIMB 10815 / 0-1).